Reading from the N-terminus, the 229-residue chain is NAD(P)H-hydrate epimerase (229 aa).

The YjeF N-terminal domain occupies 10-217; the sequence is AINVDQELFN…ALQRKYDLNL (208 aa). A (6S)-NADPHX-binding site is contributed by 60–64; sequence NNGGD. Positions 61 and 125 each coordinate K(+). Residues 129-135 and D158 each bind (6S)-NADPHX; that span reads GFSFKPP. S161 contributes to the K(+) binding site.

It belongs to the NnrE/AIBP family. K(+) serves as cofactor.

The catalysed reaction is (6R)-NADHX = (6S)-NADHX. The enzyme catalyses (6R)-NADPHX = (6S)-NADPHX. In terms of biological role, catalyzes the epimerization of the S- and R-forms of NAD(P)HX, a damaged form of NAD(P)H that is a result of enzymatic or heat-dependent hydration. This is a prerequisite for the S-specific NAD(P)H-hydrate dehydratase to allow the repair of both epimers of NAD(P)HX. In Drosophila ananassae (Fruit fly), this protein is NAD(P)H-hydrate epimerase.